The primary structure comprises 127 residues: Fluoride-specific ion channel FluC 1 (127 aa).

4 helical membrane passes run T4 to L24, V35 to F55, T71 to I91, and G101 to V121. Na(+) contacts are provided by G75 and T78.

The protein belongs to the fluoride channel Fluc/FEX (TC 1.A.43) family.

The protein localises to the cell inner membrane. It carries out the reaction fluoride(in) = fluoride(out). With respect to regulation, na(+) is not transported, but it plays an essential structural role and its presence is essential for fluoride channel function. Its function is as follows. Fluoride-specific ion channel. Important for reducing fluoride concentration in the cell, thus reducing its toxicity. In Yersinia pseudotuberculosis serotype I (strain IP32953), this protein is Fluoride-specific ion channel FluC 1.